Consider the following 697-residue polypeptide: Serine/threonine-protein kinase tousled-like 2 (697 aa).

Disordered regions lie at residues 25 to 159 (VAKG…SQSE) and 288 to 316 (KLLI…SKSN). Residues 31–44 (HNESSNQSLCSVGS) show a composition bias toward polar residues. The segment covering 46–61 (SDKELETPEKKSNDQR) has biased composition (basic and acidic residues). Polar residues predominate over residues 109–145 (SSPQHSLSNPPAAVQQGSPSSISSVNTDHSHTSTSHK). Coiled coils occupy residues 265–294 (AFQN…IKKK) and 336–373 (KLRL…IHNE). Positions 388–666 (YLLLHLLGRG…VHQLASDPYL (279 aa)) constitute a Protein kinase domain. Residues 394 to 402 (LGRGGFSEV) and lysine 417 each bind ATP. Residue aspartate 518 is the Proton acceptor of the active site.

Belongs to the protein kinase superfamily. Ser/Thr protein kinase family. As to quaternary structure, monomer. May form homodimers; homodimerization may enhance autophosphoylation and enzymatic activity. Heterodimer with TLK1. Requires Mg(2+) as cofactor. Post-translationally, phosphorylated. Autophosphorylated; phosphorylation promotes the assembly of higher order oligomers and enzymatic activity.

The protein localises to the nucleus. It localises to the nucleoplasm. The protein resides in the cytoplasm. Its subcellular location is the perinuclear region. It is found in the cytoskeleton. It carries out the reaction L-seryl-[protein] + ATP = O-phospho-L-seryl-[protein] + ADP + H(+). The catalysed reaction is L-threonyl-[protein] + ATP = O-phospho-L-threonyl-[protein] + ADP + H(+). In terms of biological role, serine/threonine-protein kinase involved in the process of chromatin assembly and probably also DNA replication, transcription, repair, and chromosome segregation. Negative regulator of amino acid starvation-induced autophagy. In Danio rerio (Zebrafish), this protein is Serine/threonine-protein kinase tousled-like 2.